The following is a 79-amino-acid chain: MAVKLRLTRMGNKKRAFYRIIAINSEARREGRPLDYIGYYNPMVDPAEVKIDTEKVQKWLERGAEPTDTVRALLKKNAQ.

The protein belongs to the bacterial ribosomal protein bS16 family.

The chain is Small ribosomal subunit protein bS16 from Oleidesulfovibrio alaskensis (strain ATCC BAA-1058 / DSM 17464 / G20) (Desulfovibrio alaskensis).